Consider the following 2517-residue polypeptide: Protein capicua homolog (2517 aa).

6 disordered regions span residues 1–197 (MKPM…SGSY), 300–325 (LSPG…HREP), 342–483 (PWEP…KYKK), 531–579 (EMEG…RGDS), 608–640 (SSRS…FGFR), and 658–767 (VRSR…FRAV). Residues 57–67 (EEAEEGEEEEA) are compositionally biased toward acidic residues. Residues 91-101 (EDPKGDGEAGR) are compositionally biased toward basic and acidic residues. 2 stretches are compositionally biased toward low complexity: residues 158-167 (TSTRSSSTDT) and 300-313 (LSPG…LPGS). Residues 396 to 405 (HCEEGEEKHP) show a composition bias toward basic and acidic residues. The segment covering 414 to 428 (LPLPPPQLLSPPPKS) has biased composition (pro residues). Over residues 451–477 (GSRSSSVASLEKGTAPAARARTPLTAA) the composition is skewed to low complexity. Polar residues predominate over residues 608–619 (SSRSGTPSFSPV). A compositionally biased stretch (pro residues) spans 677-686 (DLGPHPPPPA). A compositionally biased stretch (polar residues) spans 698 to 707 (TFQTNLTFTV). Residues 726–735 (GAPGAGGGGA) are compositionally biased toward gly residues. Phosphoserine occurs at positions 776 and 780. Disordered regions lie at residues 812-842 (IVRN…PGRG), 955-1110 (PSQP…DHIR), 1179-1220 (CNKD…APGV), 1235-1274 (SDTK…SLDG), 1290-1347 (SGPA…TSDE), 1379-1539 (RVTD…ILQT), and 1595-1628 (IASK…RVPG). The interaction with ATXN1 stretch occupies residues 937 to 955 (EPRSVAVFPWHSLVPFLAP). Residues 959–981 (DPSVQPSEAQQPASHPVASNQSK) are compositionally biased toward polar residues. Residues Ser-1055 and Ser-1082 each carry the phosphoserine modification. Composition is skewed to basic and acidic residues over residues 1087-1110 (PKER…DHIR), 1179-1188 (CNKDRKKSSS), and 1200-1209 (GHKETRERSM). Arg-1099 carries the post-translational modification Omega-N-methylarginine. Positions 1109 to 1177 (IRRPMNAFMI…AHFKAHPDWK (69 aa)) form a DNA-binding region, HMG box. At Ser-1186 the chain carries Phosphoserine. A compositionally biased stretch (polar residues) spans 1235-1245 (SDTKAPGSSSC). Ser-1271 bears the Phosphoserine mark. The segment covering 1305-1323 (GAPGPFAAPGEGGALAATG) has biased composition (low complexity). A phosphoserine mark is found at Ser-1340, Ser-1345, and Ser-1405. A compositionally biased stretch (pro residues) spans 1418–1430 (PLDPEPPGPPDPP). Residues 1439–1456 (SAPSSSASSPASSSASAA) show a composition bias toward low complexity. Residues 1457–1474 (TSFSLGSGTFKAQESGQG) show a composition bias toward polar residues. Phosphoserine is present on residues Ser-1609, Ser-1630, and Ser-1648. Arg-1772 bears the Asymmetric dimethylarginine mark. Residues 1799-1818 (QSVPSAPPPKAQSVSPVQAP) are disordered. Residue Arg-1843 is modified to Omega-N-methylarginine. 3 disordered regions span residues 2039-2064 (AATI…FPSA), 2100-2342 (SFEA…AKCE), and 2430-2517 (AATP…ATGR). The span at 2051-2064 (ATATPAPTSPFPSA) shows a compositional bias: low complexity. 2 stretches are compositionally biased toward pro residues: residues 2110-2119 (GPAPRQPLEP) and 2136-2145 (PTPPAPPPLP). Residues 2146 to 2155 (ETWTPTARSS) show a composition bias toward low complexity. At Lys-2177 the chain carries N6-acetyllysine. The span at 2198 to 2209 (PPTPPSPAPAPA) shows a compositional bias: pro residues. The residue at position 2200 (Thr-2200) is a Phosphothreonine. Ser-2203 carries the post-translational modification Phosphoserine. Positions 2210 to 2225 (VAPGGSSESSSGRAAG) are enriched in low complexity. A compositionally biased stretch (basic and acidic residues) spans 2249-2278 (KTFDSVDNRVLSEVDFEERFAELPEFRPEE). Phosphoserine occurs at positions 2260, 2282, 2287, 2291, 2298, and 2306. At Thr-2307 the chain carries Phosphothreonine. Phosphoserine is present on residues Ser-2311 and Ser-2318. Pro residues predominate over residues 2457-2469 (APTPSPAGGPDPT). A Phosphoserine modification is found at Ser-2504.

In terms of assembly, found in a complex with ATXN1 and ATXN1L. As to quaternary structure, interacts with ATXN1. As to expression, expressed in fetal brain.

The protein resides in the nucleus. Functionally, transcriptional repressor which plays a role in development of the central nervous system (CNS). In concert with ATXN1 and ATXN1L, involved in brain development. The chain is Protein capicua homolog (CIC) from Homo sapiens (Human).